Consider the following 228-residue polypeptide: Cytochrome c oxidase subunit 2 (228 aa).

Topologically, residues 1–26 (MRTWSNFNLQNSASPLMEQIIFFHDH) are mitochondrial intermembrane. The helical transmembrane segment at 27–48 (TLIILIMITILVGYIMINLFFN) threads the bilayer. The Mitochondrial matrix portion of the chain corresponds to 49 to 62 (KFINRFFLVGQMIE). The helical transmembrane segment at 63–82 (LIWTVLPAITLIFIALPSLR) threads the bilayer. The Mitochondrial intermembrane portion of the chain corresponds to 83–228 (LLYLLDELNN…FINWINNYSY (146 aa)). Cu cation contacts are provided by His161, Cys196, Glu198, Cys200, His204, and Met207. Glu198 serves as a coordination point for Mg(2+).

This sequence belongs to the cytochrome c oxidase subunit 2 family. In terms of assembly, component of the cytochrome c oxidase (complex IV, CIV), a multisubunit enzyme composed of a catalytic core of 3 subunits and several supernumerary subunits. The complex exists as a monomer or a dimer and forms supercomplexes (SCs) in the inner mitochondrial membrane with ubiquinol-cytochrome c oxidoreductase (cytochrome b-c1 complex, complex III, CIII). It depends on Cu cation as a cofactor.

The protein localises to the mitochondrion inner membrane. It carries out the reaction 4 Fe(II)-[cytochrome c] + O2 + 8 H(+)(in) = 4 Fe(III)-[cytochrome c] + 2 H2O + 4 H(+)(out). Its function is as follows. Component of the cytochrome c oxidase, the last enzyme in the mitochondrial electron transport chain which drives oxidative phosphorylation. The respiratory chain contains 3 multisubunit complexes succinate dehydrogenase (complex II, CII), ubiquinol-cytochrome c oxidoreductase (cytochrome b-c1 complex, complex III, CIII) and cytochrome c oxidase (complex IV, CIV), that cooperate to transfer electrons derived from NADH and succinate to molecular oxygen, creating an electrochemical gradient over the inner membrane that drives transmembrane transport and the ATP synthase. Cytochrome c oxidase is the component of the respiratory chain that catalyzes the reduction of oxygen to water. Electrons originating from reduced cytochrome c in the intermembrane space (IMS) are transferred via the dinuclear copper A center (CU(A)) of subunit 2 and heme A of subunit 1 to the active site in subunit 1, a binuclear center (BNC) formed by heme A3 and copper B (CU(B)). The BNC reduces molecular oxygen to 2 water molecules using 4 electrons from cytochrome c in the IMS and 4 protons from the mitochondrial matrix. This chain is Cytochrome c oxidase subunit 2 (COII), found in Galleria mellonella (Greater wax moth).